The sequence spans 437 residues: Xylose isomerase (437 aa).

Residues H101 and D104 contribute to the active site. Mg(2+) contacts are provided by E232, E268, H271, D296, D307, D309, and D339.

Belongs to the xylose isomerase family. As to quaternary structure, homotetramer. Mg(2+) serves as cofactor.

It is found in the cytoplasm. It carries out the reaction alpha-D-xylose = alpha-D-xylulofuranose. In Mannheimia succiniciproducens (strain KCTC 0769BP / MBEL55E), this protein is Xylose isomerase.